A 159-amino-acid chain; its full sequence is ATP synthase subunit b (159 aa).

The chain crosses the membrane as a helical span at residues 8–28 (ILATIINFIILILILKHFFWD).

This sequence belongs to the ATPase B chain family. In terms of assembly, F-type ATPases have 2 components, F(1) - the catalytic core - and F(0) - the membrane proton channel. F(1) has five subunits: alpha(3), beta(3), gamma(1), delta(1), epsilon(1). F(0) has three main subunits: a(1), b(2) and c(10-14). The alpha and beta chains form an alternating ring which encloses part of the gamma chain. F(1) is attached to F(0) by a central stalk formed by the gamma and epsilon chains, while a peripheral stalk is formed by the delta and b chains.

Its subcellular location is the cell membrane. F(1)F(0) ATP synthase produces ATP from ADP in the presence of a proton or sodium gradient. F-type ATPases consist of two structural domains, F(1) containing the extramembraneous catalytic core and F(0) containing the membrane proton channel, linked together by a central stalk and a peripheral stalk. During catalysis, ATP synthesis in the catalytic domain of F(1) is coupled via a rotary mechanism of the central stalk subunits to proton translocation. In terms of biological role, component of the F(0) channel, it forms part of the peripheral stalk, linking F(1) to F(0). The polypeptide is ATP synthase subunit b (Clostridium perfringens (strain ATCC 13124 / DSM 756 / JCM 1290 / NCIMB 6125 / NCTC 8237 / Type A)).